Reading from the N-terminus, the 235-residue chain is 1-(5-phosphoribosyl)-5-[(5-phosphoribosylamino)methylideneamino] imidazole-4-carboxamide isomerase (235 aa).

Asp8 (proton acceptor) is an active-site residue. Residue Asp127 is the Proton donor of the active site.

Belongs to the HisA/HisF family.

It is found in the cytoplasm. It catalyses the reaction 1-(5-phospho-beta-D-ribosyl)-5-[(5-phospho-beta-D-ribosylamino)methylideneamino]imidazole-4-carboxamide = 5-[(5-phospho-1-deoxy-D-ribulos-1-ylimino)methylamino]-1-(5-phospho-beta-D-ribosyl)imidazole-4-carboxamide. The protein operates within amino-acid biosynthesis; L-histidine biosynthesis; L-histidine from 5-phospho-alpha-D-ribose 1-diphosphate: step 4/9. The polypeptide is 1-(5-phosphoribosyl)-5-[(5-phosphoribosylamino)methylideneamino] imidazole-4-carboxamide isomerase (Aliarcobacter butzleri (strain RM4018) (Arcobacter butzleri)).